The following is a 445-amino-acid chain: Reticulon-4 receptor-like 1 (445 aa).

An N-terminal signal peptide occupies residues 1-24; it reads MLRKGCCVELLLLLLAGELPLGGG. The LRRNT domain occupies 25-54; that stretch reads CPRDCVCYPAPMTVSCQAHNFAAIPEGIPE. LRR repeat units lie at residues 55 to 76, 77 to 98, 101 to 123, 126 to 147, 150 to 171, 174 to 195, 198 to 219, and 222 to 243; these read DSER…HFSP, AMVT…TFEG, HLEE…TFQG, KLHA…IFGG, SLQY…IFVD, NLSH…IFRG, NLDR…AFHD, and RLTT…CLAP. Residues 255–306 enclose the LRRCT domain; the sequence is NAWDCGCRARSLWEWLRRFRGSSSAVPCATPELRQGQDLKLLRVEDFRNCTG. Disordered regions lie at residues 307–377 and 401–424; these read PVSP…SGKE and RPKR…QQAS. Composition is skewed to basic residues over residues 352-366 and 401-413; these read GYKK…HRNR and RPKR…RRTP. S424 carries GPI-anchor amidated serine lipidation. The helical transmembrane segment at 424-444 threads the bilayer; that stretch reads SSGTALGAPLLAWILGLAVTL. Positions 425–445 are cleaved as a propeptide — removed in mature form; sequence SGTALGAPLLAWILGLAVTLR.

Belongs to the Nogo receptor family. Identified in a complex that contains RTN4R, RTN4RL1 and NGFR; the interaction depends on the presence of chondroitin sulfate proteoglycans. Does not interact with MAG, OMG and RTN4. Detected in brain (at protein level). Detected in retina ganglion cell layer and inner nuclear layer.

It is found in the cell membrane. The protein resides in the membrane raft. It localises to the perikaryon. The protein localises to the cell projection. In terms of biological role, cell surface receptor that plays a functionally redundant role in postnatal brain development and in regulating axon regeneration in the adult central nervous system. Contributes to normal axon migration across the brain midline and normal formation of the corpus callosum. Protects motoneurons against apoptosis; protection against apoptosis is probably mediated by MAG. Plays a role in inhibiting neurite outgrowth and axon regeneration via its binding to neuronal chondroitin sulfate proteoglycans. Binds heparin. Like other family members, plays a role in restricting the number dendritic spines and the number of synapses that are formed during brain development. Signaling mediates activation of Rho and downstream reorganization of the actin cytoskeleton. In Mus musculus (Mouse), this protein is Reticulon-4 receptor-like 1.